The chain runs to 458 residues: Vasoactive intestinal polypeptide receptor 1 (458 aa).

The first 31 residues, methionine 1–valine 31, serve as a signal peptide directing secretion. Topologically, residues glycine 32–serine 142 are extracellular. 5 cysteine pairs are disulfide-bonded: cysteine 38-cysteine 209, cysteine 51-cysteine 73, cysteine 64-cysteine 106, cysteine 87-cysteine 123, and cysteine 216-cysteine 286. Asparagine 59, asparagine 70, asparagine 101, and asparagine 105 each carry an N-linked (GlcNAc...) asparagine glycan. The helical transmembrane segment at valine 143 to leucine 167 threads the bilayer. Residues phenylalanine 168–arginine 175 are Cytoplasmic-facing. The chain crosses the membrane as a helical span at residues asparagine 176–aspartate 197. Topologically, residues leucine 198–lysine 217 are extracellular. A helical transmembrane segment spans residues alanine 218–histidine 242. At threonine 243–tyrosine 255 the chain is on the cytoplasmic side. A helical membrane pass occupies residues phenylalanine 256 to valine 277. Topologically, residues arginine 278–serine 292 are extracellular. Residues serine 293–isoleucine 317 form a helical membrane-spanning segment. The Cytoplasmic portion of the chain corresponds to glycine 318–arginine 339. Residues leucine 340–phenylalanine 360 form a helical membrane-spanning segment. The Extracellular portion of the chain corresponds to phenylalanine 361–glutamate 368. The helical transmembrane segment at valine 369–leucine 392 threads the bilayer. Residues asparagine 393–valine 458 are Cytoplasmic-facing.

This sequence belongs to the G-protein coupled receptor 2 family. As to quaternary structure, interacts with ADCYAP1/PACAP; activated by both PACAP27 and PACAP38 neuropeptides. Interacts with VIP; the interaction results in VIPR1 activation.

It localises to the cell membrane. In terms of biological role, g protein-coupled receptor activated by the neuropeptides vasoactive intestinal peptide (VIP) and pituitary adenylate cyclase-activating polypeptide (ADCYAP1/PACAP). Binds VIP and both PACAP27 and PACAP38 bioactive peptides with the following order of ligand affinity VIP = PACAP27 &gt; PACAP38. Ligand binding causes a conformation change that triggers signaling via guanine nucleotide-binding proteins (G proteins) and modulates the activity of downstream effectors. Activates cAMP-dependent pathway. This is Vasoactive intestinal polypeptide receptor 1 (VIPR1) from Sus scrofa (Pig).